A 480-amino-acid polypeptide reads, in one-letter code: Protein nucleotidyltransferase YdiU (480 aa).

ATP is bound by residues glycine 84, glycine 86, arginine 87, lysine 107, aspartate 119, glycine 120, arginine 170, and arginine 177. Catalysis depends on aspartate 246, which acts as the Proton acceptor. 2 residues coordinate Mg(2+): asparagine 247 and aspartate 256. Residue aspartate 256 participates in ATP binding.

Belongs to the SELO family. It depends on Mg(2+) as a cofactor. The cofactor is Mn(2+).

The catalysed reaction is L-seryl-[protein] + ATP = 3-O-(5'-adenylyl)-L-seryl-[protein] + diphosphate. It carries out the reaction L-threonyl-[protein] + ATP = 3-O-(5'-adenylyl)-L-threonyl-[protein] + diphosphate. The enzyme catalyses L-tyrosyl-[protein] + ATP = O-(5'-adenylyl)-L-tyrosyl-[protein] + diphosphate. It catalyses the reaction L-histidyl-[protein] + UTP = N(tele)-(5'-uridylyl)-L-histidyl-[protein] + diphosphate. The catalysed reaction is L-seryl-[protein] + UTP = O-(5'-uridylyl)-L-seryl-[protein] + diphosphate. It carries out the reaction L-tyrosyl-[protein] + UTP = O-(5'-uridylyl)-L-tyrosyl-[protein] + diphosphate. Its function is as follows. Nucleotidyltransferase involved in the post-translational modification of proteins. It can catalyze the addition of adenosine monophosphate (AMP) or uridine monophosphate (UMP) to a protein, resulting in modifications known as AMPylation and UMPylation. The polypeptide is Protein nucleotidyltransferase YdiU (Pseudoalteromonas atlantica (strain T6c / ATCC BAA-1087)).